Consider the following 234-residue polypeptide: AA9 family lytic polysaccharide monooxygenase D (234 aa).

A signal peptide spans 1 to 18 (MRIEKLLNAALLAGAVSA). The Cu(2+) site is built by His19 and His95. Cys57 and Cys182 form a disulfide bridge. Residues His168 and Gln177 each coordinate O2. Tyr179 contributes to the Cu(2+) binding site.

Belongs to the polysaccharide monooxygenase AA9 family. Cu(2+) serves as cofactor.

Its subcellular location is the secreted. The catalysed reaction is [(1-&gt;4)-beta-D-glucosyl]n+m + reduced acceptor + O2 = 4-dehydro-beta-D-glucosyl-[(1-&gt;4)-beta-D-glucosyl]n-1 + [(1-&gt;4)-beta-D-glucosyl]m + acceptor + H2O.. Its function is as follows. Lytic polysaccharide monooxygenase (LPMO) that depolymerizes crystalline and amorphous polysaccharides via the oxidation of scissile alpha- or beta-(1-4)-glycosidic bonds, yielding C1 or C4 oxidation products. Catalysis by LPMOs requires the reduction of the active-site copper from Cu(II) to Cu(I) by a reducing agent and H(2)O(2) or O(2) as a cosubstrate. This Malbranchea cinnamomea (Thermophilic fungus) protein is AA9 family lytic polysaccharide monooxygenase D.